Reading from the N-terminus, the 680-residue chain is WD repeat-containing protein 48 homolog (680 aa).

8 WD repeats span residues 26–65 (QHRN…SEKY), 71–110 (HHND…CMST), 113–152 (THRD…ALTA), 164–203 (GSKD…RSMK), 206–245 (GHTE…CVQT), 248–287 (VHKE…NKTL), 290–329 (EEQA…RCTM), and 350–389 (KGGA…KKEQ). A disordered region spans residues 592–616 (ETTPSGGNANNSLQNSQSDANSEGS).

Belongs to the WD repeat WDR48 family. Catalytic component of the Usp12-46 deubiquitylase complex consisting of Usp12-46, Wdr20 and Uaf1; regulatory subunit that, together wtih Wdr20, stabilizes Usp12-46. The Usp12-46 deubiquitylase complex associates with arr/arrow; the interaction leads to deubiquitination and stabilization of arr/arrow.

In terms of biological role, regulatory component of the Usp12-46 deubiquitylase complex. activates deubiquitination by increasing the catalytic turnover without increasing the affinity of deubiquitinating enzymes for the substrate. The complex deubiquitylates the wg/wingless-signaling receptor arr/arrow, which stabilizes the receptor and increases its concentration at the cell surface; this enhances the sensitivity of cells to wg/wingless-signal stimulation. This increases the amplitude and spatial range of the signaling response to the wg/wingless morphogen gradient, facilitating the precise concentration-dependent regulation of its target genes. Together with Wdr20 and Usp12-46 required for wg/wingless-mediated signaling in the wing imaginal disc and for wg/wingless-dependent regulation of intestinal stem cell proliferation. The polypeptide is WD repeat-containing protein 48 homolog (Drosophila erecta (Fruit fly)).